Here is a 914-residue protein sequence, read N- to C-terminus: Probable dipeptidyl-aminopeptidase B (914 aa).

Basic and acidic residues predominate over residues M1–S10. The segment at M1–R63 is disordered. The Cytoplasmic segment spans residues M1 to R91. Residues S20–S35 show a composition bias toward low complexity. The segment covering Q45–M56 has biased composition (polar residues). Residues I92–L112 traverse the membrane as a helical; Signal-anchor for type II membrane protein segment. Topologically, residues T113–V914 are vacuolar. 3 N-linked (GlcNAc...) asparagine glycosylation sites follow: N348, N565, and N639. The active-site Charge relay system is S753. A glycan (N-linked (GlcNAc...) asparagine) is linked at N807. Catalysis depends on charge relay system residues D830 and H863.

This sequence belongs to the peptidase S9B family.

The protein localises to the vacuole membrane. It catalyses the reaction Release of an N-terminal dipeptide, Xaa-Yaa-|-Zaa-, from a polypeptide, preferentially when Yaa is Pro, provided Zaa is neither Pro nor hydroxyproline.. In terms of biological role, type IV dipeptidyl-peptidase which removes N-terminal dipeptides sequentially from polypeptides having unsubstituted N-termini provided that the penultimate residue is proline. The protein is Probable dipeptidyl-aminopeptidase B (dapB) of Aspergillus clavatus (strain ATCC 1007 / CBS 513.65 / DSM 816 / NCTC 3887 / NRRL 1 / QM 1276 / 107).